A 633-amino-acid polypeptide reads, in one-letter code: 1-deoxy-D-xylulose-5-phosphate synthase 2 (633 aa).

Thiamine diphosphate contacts are provided by residues H73 and 113–115 (SHA). D145 is a Mg(2+) binding site. Residues 146–147 (GA), N175, Y286, and E367 contribute to the thiamine diphosphate site. Residue N175 coordinates Mg(2+).

Belongs to the transketolase family. DXPS subfamily. In terms of assembly, homodimer. It depends on Mg(2+) as a cofactor. Thiamine diphosphate serves as cofactor.

The catalysed reaction is D-glyceraldehyde 3-phosphate + pyruvate + H(+) = 1-deoxy-D-xylulose 5-phosphate + CO2. It participates in metabolic intermediate biosynthesis; 1-deoxy-D-xylulose 5-phosphate biosynthesis; 1-deoxy-D-xylulose 5-phosphate from D-glyceraldehyde 3-phosphate and pyruvate: step 1/1. In terms of biological role, catalyzes the acyloin condensation reaction between C atoms 2 and 3 of pyruvate and glyceraldehyde 3-phosphate to yield 1-deoxy-D-xylulose-5-phosphate (DXP). The protein is 1-deoxy-D-xylulose-5-phosphate synthase 2 of Kitasatospora griseola (Streptomyces griseolosporeus).